Consider the following 114-residue polypeptide: Nucleoid-associated protein THEYE_A1069 (114 aa).

It belongs to the YbaB/EbfC family. Homodimer.

The protein localises to the cytoplasm. It is found in the nucleoid. Functionally, binds to DNA and alters its conformation. May be involved in regulation of gene expression, nucleoid organization and DNA protection. This is Nucleoid-associated protein THEYE_A1069 from Thermodesulfovibrio yellowstonii (strain ATCC 51303 / DSM 11347 / YP87).